The chain runs to 725 residues: Ribonuclease R (725 aa).

An RNB domain is found at 264–592; it reads RQDLTDLAFV…IHRLLWMHLF (329 aa). Positions 644 to 725 constitute an S1 motif domain; the sequence is GKTFSGFISA…IQKRAILTLI (82 aa).

This sequence belongs to the RNR ribonuclease family. RNase R subfamily.

It localises to the cytoplasm. It catalyses the reaction Exonucleolytic cleavage in the 3'- to 5'-direction to yield nucleoside 5'-phosphates.. In terms of biological role, 3'-5' exoribonuclease that releases 5'-nucleoside monophosphates and is involved in maturation of structured RNAs. In Mycoplasma genitalium (strain ATCC 33530 / DSM 19775 / NCTC 10195 / G37) (Mycoplasmoides genitalium), this protein is Ribonuclease R.